Consider the following 38-residue polypeptide: uncharacterized protein (38 aa).

Belongs to the asfivirus C84L family.

This is an uncharacterized protein from Ornithodoros (relapsing fever ticks).